The chain runs to 55 residues: ATP synthase F(0) complex subunit 8 (55 aa).

The helical transmembrane segment at 4–24 threads the bilayer; it reads LNPHPWFSIFITSWLILIIIL.

Belongs to the ATPase protein 8 family. In terms of assembly, component of the ATP synthase complex composed at least of ATP5F1A/subunit alpha, ATP5F1B/subunit beta, ATP5MC1/subunit c (homooctomer), MT-ATP6/subunit a, MT-ATP8/subunit 8, ATP5ME/subunit e, ATP5MF/subunit f, ATP5MG/subunit g, ATP5MK/subunit k, ATP5MJ/subunit j, ATP5F1C/subunit gamma, ATP5F1D/subunit delta, ATP5F1E/subunit epsilon, ATP5PF/subunit F6, ATP5PB/subunit b, ATP5PD/subunit d, ATP5PO/subunit OSCP. ATP synthase complex consists of a soluble F(1) head domain (subunits alpha(3) and beta(3)) - the catalytic core - and a membrane F(0) domain - the membrane proton channel (subunits c, a, 8, e, f, g, k and j). These two domains are linked by a central stalk (subunits gamma, delta, and epsilon) rotating inside the F1 region and a stationary peripheral stalk (subunits F6, b, d, and OSCP).

It is found in the mitochondrion membrane. Functionally, subunit 8, of the mitochondrial membrane ATP synthase complex (F(1)F(0) ATP synthase or Complex V) that produces ATP from ADP in the presence of a proton gradient across the membrane which is generated by electron transport complexes of the respiratory chain. ATP synthase complex consist of a soluble F(1) head domain - the catalytic core - and a membrane F(1) domain - the membrane proton channel. These two domains are linked by a central stalk rotating inside the F(1) region and a stationary peripheral stalk. During catalysis, ATP synthesis in the catalytic domain of F(1) is coupled via a rotary mechanism of the central stalk subunits to proton translocation. In vivo, can only synthesize ATP although its ATP hydrolase activity can be activated artificially in vitro. Part of the complex F(0) domain. The sequence is that of ATP synthase F(0) complex subunit 8 from Pelomedusa subrufa (African side-necked turtle).